Reading from the N-terminus, the 123-residue chain is UPF0102 protein CLK_1817 (123 aa).

This sequence belongs to the UPF0102 family.

This chain is UPF0102 protein CLK_1817, found in Clostridium botulinum (strain Loch Maree / Type A3).